The chain runs to 317 residues: Ribose-phosphate pyrophosphokinase (317 aa).

ATP-binding positions include 43 to 45 and 102 to 103; these read DGE and RQ. His-136 and Asp-175 together coordinate Mg(2+). Lys-198 is a catalytic residue. D-ribose 5-phosphate-binding positions include Arg-200, Asp-224, and 228 to 232; that span reads DTAGT.

The protein belongs to the ribose-phosphate pyrophosphokinase family. Class I subfamily. Homohexamer. The cofactor is Mg(2+).

The protein resides in the cytoplasm. It carries out the reaction D-ribose 5-phosphate + ATP = 5-phospho-alpha-D-ribose 1-diphosphate + AMP + H(+). Its pathway is metabolic intermediate biosynthesis; 5-phospho-alpha-D-ribose 1-diphosphate biosynthesis; 5-phospho-alpha-D-ribose 1-diphosphate from D-ribose 5-phosphate (route I): step 1/1. Involved in the biosynthesis of the central metabolite phospho-alpha-D-ribosyl-1-pyrophosphate (PRPP) via the transfer of pyrophosphoryl group from ATP to 1-hydroxyl of ribose-5-phosphate (Rib-5-P). This Corynebacterium ammoniagenes (Brevibacterium ammoniagenes) protein is Ribose-phosphate pyrophosphokinase.